The primary structure comprises 590 residues: Glutamine--tRNA ligase (590 aa).

A 'HIGH' region motif is present at residues 55–65; the sequence is PEPNGYLHIGH. ATP-binding positions include 56–58 and 62–68; these read EPN and HIGHAKS. Residues Asp-93 and Tyr-238 each coordinate L-glutamine. ATP contacts are provided by residues Thr-257 and 292–293; that span reads RL. The 'KMSKS' region signature appears at 299 to 303; sequence ITSKR.

It belongs to the class-I aminoacyl-tRNA synthetase family. As to quaternary structure, monomer.

The protein resides in the cytoplasm. The enzyme catalyses tRNA(Gln) + L-glutamine + ATP = L-glutaminyl-tRNA(Gln) + AMP + diphosphate. This is Glutamine--tRNA ligase from Polynucleobacter necessarius subsp. necessarius (strain STIR1).